Here is a 172-residue protein sequence, read N- to C-terminus: 2S seed storage-like protein (172 aa).

The first 35 residues, 1–35, serve as a signal peptide directing secretion; the sequence is MGVFSPSTTRLTLKWFSLSVALFLLFHWGIPSVDG. The interval 108–172 is disordered; that stretch reads FMDSDSQEDA…RYSMTGSSFK (65 aa). The segment covering 151 to 160 has biased composition (basic and acidic residues); it reads EPPRRCDIQR.

This sequence belongs to the 2S seed storage albumins family.

The polypeptide is 2S seed storage-like protein (Picea glauca (White spruce)).